A 327-amino-acid polypeptide reads, in one-letter code: Replication factor C small subunit (327 aa).

47-54 is a binding site for ATP; it reads GPPGTGKT.

It belongs to the activator 1 small subunits family. RfcS subfamily. Heteromultimer composed of small subunits (RfcS) and large subunits (RfcL).

Part of the RFC clamp loader complex which loads the PCNA sliding clamp onto DNA. In Sulfurisphaera tokodaii (strain DSM 16993 / JCM 10545 / NBRC 100140 / 7) (Sulfolobus tokodaii), this protein is Replication factor C small subunit.